The following is a 176-amino-acid chain: Probable DNA-directed RNA polymerase subunit delta (176 aa).

An HTH HARE-type domain is found at 14-81 (LSLIDVAHFI…GNNMWGLRAW (68 aa)). 2 disordered regions span residues 91–119 (VQTQ…VDYD) and 140–176 (DEDE…PEDK). Composition is skewed to acidic residues over residues 105–119 (DDDD…VDYD) and 159–176 (TVED…PEDK).

The protein belongs to the RpoE family. RNAP is composed of a core of 2 alpha, a beta and a beta' subunits. The core is associated with a delta subunit and one of several sigma factors.

In terms of biological role, participates in both the initiation and recycling phases of transcription. In the presence of the delta subunit, RNAP displays an increased specificity of transcription, a decreased affinity for nucleic acids, and an increased efficiency of RNA synthesis because of enhanced recycling. This chain is Probable DNA-directed RNA polymerase subunit delta, found in Listeria welshimeri serovar 6b (strain ATCC 35897 / DSM 20650 / CCUG 15529 / CIP 8149 / NCTC 11857 / SLCC 5334 / V8).